Reading from the N-terminus, the 56-residue chain is Conotoxin Cal6.41a (56 aa).

The signal sequence occupies residues 1–23 (MSGSGAMLLGLLILVAMATSLDT). Intrachain disulfides connect Cys27/Cys41, Cys33/Cys50, and Cys40/Cys54.

As to expression, expressed by the venom duct.

It is found in the secreted. Its function is as follows. Probable neurotoxin. In Californiconus californicus (California cone), this protein is Conotoxin Cal6.41a.